A 556-amino-acid polypeptide reads, in one-letter code: Valencene synthase (556 aa).

The segment covering 1-12 (MSTQVSASSLAQ) has biased composition (polar residues). The interval 1-24 (MSTQVSASSLAQIPQPKNRPVANF) is disordered. Mg(2+)-binding residues include Asp-310, Asp-314, and Glu-462. Residues 310-314 (DDIHD) carry the DDXXD motif motif.

It belongs to the terpene synthase family. Tpsa subfamily. The cofactor is Mg(2+). In terms of tissue distribution, expressed in flowers and anthers. Detected inside the pollen grains, but not in stems, leaves, tendrils, roots, seeds, pistils or caps.

The protein localises to the cytoplasm. It catalyses the reaction (2E,6E)-farnesyl diphosphate = (+)-valencene + diphosphate. The catalysed reaction is (2E,6E)-farnesyl diphosphate = (-)-7-epi-alpha-selinene + diphosphate. Its pathway is secondary metabolite biosynthesis; terpenoid biosynthesis. Involved in the biosynthesis of valencene, a major volatile emitted from flowers of grapevine. Can use farnesyl diphosphate as substrate, but not geranyl diphosphate or geranylgeranyl diphosphate. Produces mainly (+)-valencene and (-)-7-epi-alpha-selinene along with five minor products. This chain is Valencene synthase (ValCS), found in Vitis vinifera (Grape).